We begin with the raw amino-acid sequence, 784 residues long: uncharacterized protein (784 aa).

In terms of domain architecture, 3'-5' exonuclease spans 422 to 619; sequence IRIVQNEQDL…EVFQKIVEVV (198 aa).

This is an uncharacterized protein from Caenorhabditis elegans.